We begin with the raw amino-acid sequence, 88 residues long: Small ribosomal subunit protein bS20 (88 aa).

Over residues M1–N21 the composition is skewed to basic residues. Residues M1–S26 form a disordered region.

Belongs to the bacterial ribosomal protein bS20 family.

Functionally, binds directly to 16S ribosomal RNA. In Shewanella halifaxensis (strain HAW-EB4), this protein is Small ribosomal subunit protein bS20.